We begin with the raw amino-acid sequence, 603 residues long: Adenine deaminase (603 aa).

This sequence belongs to the metallo-dependent hydrolases superfamily. Adenine deaminase family. Mn(2+) serves as cofactor.

The catalysed reaction is adenine + H2O + H(+) = hypoxanthine + NH4(+). The sequence is that of Adenine deaminase from Ruegeria pomeroyi (strain ATCC 700808 / DSM 15171 / DSS-3) (Silicibacter pomeroyi).